We begin with the raw amino-acid sequence, 247 residues long: Terpene cyclase adrI (247 aa).

The next 5 helical transmembrane spans lie at valine 20 to leucine 40, threonine 51 to proline 71, histidine 76 to isoleucine 96, asparagine 112 to alanine 132, and phenylalanine 141 to leucine 161. Asparagine 164 is a glycosylation site (N-linked (GlcNAc...) asparagine). The next 2 helical transmembrane spans lie at phenylalanine 179–phenylalanine 199 and lysine 205–isoleucine 225.

This sequence belongs to the paxB family.

The protein localises to the membrane. It participates in secondary metabolite biosynthesis; terpenoid biosynthesis. In terms of biological role, terpene cyclase; part of the gene cluster that mediates the biosynthesis of andrastins, meroterpenoid compounds that exhibit inhibitory activity against ras farnesyltransferase, suggesting that they could be promising leads for antitumor agents. The first step of the pathway is the synthesis of 3,5-dimethylorsellinic acid (DMOA) by the polyketide synthase adrD via condensation of one acetyl-CoA starter unit with 3 malonyl-CoA units and 2 methylations. DMAO is then converted to farnesyl-DMAO by the prenyltransferase adrG. The methyltransferase adrK catalyzes the methylation of the carboxyl group of farnesyl-DMAO to farnesyl-DMAO methyl ester which is further converted to epoxyfarnesyl-DMAO methyl ester by the FAD-dependent monooxygenase adrH. The terpene cyclase adrI then catalyzes the carbon skeletal rearrangement to generate the andrastin E, the first compound in the pathway having the andrastin scaffold, with the tetracyclic ring system. The post-cyclization tailoring enzymes adrF, adrE, adrJ, and adrA, are involved in the conversion of andrastin E into andrastin A. The short chain dehydrogenase adrF is responsible for the oxidation of the C-3 a hydroxyl group of andrastin E to yield the corresponding ketone, andrastin D. The ketoreductase adrE stereoselectively reduces the carbonyl moiety to reverse the stereochemistry of the C-3 position to yield andrastin F. The acetyltransferase adrJ is the acetyltransferase that attaches the acetyl group to the C-3 hydroxyl group of andrastin F to yield andrastin C. Finally, the cytochrome P450 monooxygenase adrA catalyzes two sequential oxidation reactions of the C-23 methyl group, to generate the corresponding alcohol andrastin B, and aldehyde andrastin A. The protein is Terpene cyclase adrI of Penicillium rubens (strain ATCC 28089 / DSM 1075 / NRRL 1951 / Wisconsin 54-1255) (Penicillium chrysogenum).